Here is a 119-residue protein sequence, read N- to C-terminus: Large ribosomal subunit protein uL18 (119 aa).

The protein belongs to the universal ribosomal protein uL18 family. In terms of assembly, part of the 50S ribosomal subunit; part of the 5S rRNA/L5/L18/L25 subcomplex. Contacts the 5S and 23S rRNAs.

This is one of the proteins that bind and probably mediate the attachment of the 5S RNA into the large ribosomal subunit, where it forms part of the central protuberance. The protein is Large ribosomal subunit protein uL18 of Lactobacillus johnsonii (strain CNCM I-12250 / La1 / NCC 533).